A 93-amino-acid polypeptide reads, in one-letter code: Large ribosomal subunit protein uL23 (93 aa).

This sequence belongs to the universal ribosomal protein uL23 family. As to quaternary structure, part of the 50S ribosomal subunit. Contacts protein L29, and trigger factor when it is bound to the ribosome.

In terms of biological role, one of the early assembly proteins it binds 23S rRNA. One of the proteins that surrounds the polypeptide exit tunnel on the outside of the ribosome. Forms the main docking site for trigger factor binding to the ribosome. The sequence is that of Large ribosomal subunit protein uL23 from Nautilia profundicola (strain ATCC BAA-1463 / DSM 18972 / AmH).